A 600-amino-acid chain; its full sequence is NADH-quinone oxidoreductase subunit C/D (600 aa).

An NADH dehydrogenase I subunit C region spans residues 1 to 190; the sequence is MVNNMTDLTA…SPFELTKAKQ (190 aa). Residues 214 to 600 form an NADH dehydrogenase I subunit D region; it reads DFMFLNLGPN…IDFVMSDVDR (387 aa).

It in the N-terminal section; belongs to the complex I 30 kDa subunit family. This sequence in the C-terminal section; belongs to the complex I 49 kDa subunit family. As to quaternary structure, NDH-1 is composed of 13 different subunits. Subunits NuoB, CD, E, F, and G constitute the peripheral sector of the complex.

It localises to the cell inner membrane. It carries out the reaction a quinone + NADH + 5 H(+)(in) = a quinol + NAD(+) + 4 H(+)(out). NDH-1 shuttles electrons from NADH, via FMN and iron-sulfur (Fe-S) centers, to quinones in the respiratory chain. The immediate electron acceptor for the enzyme in this species is believed to be ubiquinone. Couples the redox reaction to proton translocation (for every two electrons transferred, four hydrogen ions are translocated across the cytoplasmic membrane), and thus conserves the redox energy in a proton gradient. This chain is NADH-quinone oxidoreductase subunit C/D, found in Escherichia coli O157:H7.